A 383-amino-acid chain; its full sequence is ATP phosphoribosyltransferase regulatory subunit (383 aa).

This sequence belongs to the class-II aminoacyl-tRNA synthetase family. HisZ subfamily. As to quaternary structure, heteromultimer composed of HisG and HisZ subunits.

The protein resides in the cytoplasm. It participates in amino-acid biosynthesis; L-histidine biosynthesis; L-histidine from 5-phospho-alpha-D-ribose 1-diphosphate: step 1/9. Required for the first step of histidine biosynthesis. May allow the feedback regulation of ATP phosphoribosyltransferase activity by histidine. The polypeptide is ATP phosphoribosyltransferase regulatory subunit (Neisseria meningitidis serogroup C (strain 053442)).